A 400-amino-acid chain; its full sequence is Elongation factor Tu (400 aa).

Positions 10–208 (KPHVNVGTIG…AMDNYIPDPQ (199 aa)) constitute a tr-type G domain. The interval 19 to 26 (GHIDHGKS) is G1. 19–26 (GHIDHGKS) contributes to the GTP binding site. Ser-26 lines the Mg(2+) pocket. A G2 region spans residues 60–64 (GITIN). The interval 81–84 (DCPG) is G3. Residues 81–85 (DCPGH) and 136–139 (NKTD) contribute to the GTP site. The G4 stretch occupies residues 136–139 (NKTD). The tract at residues 174–176 (SAL) is G5.

Belongs to the TRAFAC class translation factor GTPase superfamily. Classic translation factor GTPase family. EF-Tu/EF-1A subfamily. As to quaternary structure, monomer.

Its subcellular location is the cytoplasm. It carries out the reaction GTP + H2O = GDP + phosphate + H(+). GTP hydrolase that promotes the GTP-dependent binding of aminoacyl-tRNA to the A-site of ribosomes during protein biosynthesis. This Thermotoga maritima (strain ATCC 43589 / DSM 3109 / JCM 10099 / NBRC 100826 / MSB8) protein is Elongation factor Tu.